The sequence spans 414 residues: MANSC domain-containing protein 1 (414 aa).

A signal peptide spans 1–24 (MLFRGTSLAYSLLVISFLTPRSSA). The Extracellular portion of the chain corresponds to 25–369 (GQNCLTKSLE…HGLSFEKWLL (345 aa)). The MANSC domain occupies 32–116 (SLEDVVIDIQ…LKPAKGLVTY (85 aa)). N-linked (GlcNAc...) asparagine glycosylation is found at Asn128, Asn234, and Asn335. The segment at 311–339 (FQGGSTLTSDPRHGKSSTSESSITNKTAS) is disordered. Residues 326-338 (SSTSESSITNKTA) show a composition bias toward polar residues. A helical membrane pass occupies residues 370-392 (IGTLLCGVLFLVIGLVLLGRMLV). The Cytoplasmic portion of the chain corresponds to 393-414 (EALRRKRYSRLDYLINGIYVDI).

It localises to the membrane. This is MANSC domain-containing protein 1 (Mansc1) from Mus musculus (Mouse).